Reading from the N-terminus, the 1150-residue chain is C5a peptidase (1150 aa).

The N-terminal stretch at 1–31 (MRKKQKLPFDKLAIALMSTSILLNAQSDIKA) is a signal peptide. The disordered stretch occupies residues 33–73 (TVTEDTPAAEQAVETPQPTAVSEEVPSSKETKTPQTPDNAE). Residues 99–581 (KATIRDLNDP…AGAVDAKKAS (483 aa)) form the Peptidase S8 domain. Catalysis depends on charge relay system residues Asp-130, His-193, and Ser-512. Composition is skewed to basic and acidic residues over residues 1029 to 1054 (EGHS…KPEQ) and 1061 to 1073 (PDKK…EKDS). The segment at 1029–1116 (EGHSNKPEQD…RDQLPTTNDK (88 aa)) is disordered. 3 consecutive repeat copies span residues 1034 to 1050 (KPEQ…KPEA), 1051 to 1067 (KPEQ…KPET), and 1068 to 1084 (KPEK…TPQK). A 3 X 17 AA tandem repeats region spans residues 1034–1084 (KPEQDGSDQAPDKKPEAKPEQDGSGQTPDKKPETKPEKDSSGQTPGKTPQK). A compositionally biased stretch (polar residues) spans 1075–1089 (GQTPGKTPQKGQPSR). Residues 1110–1114 (LPTTN) carry the LPXTG sorting signal motif. Thr-1113 is modified (pentaglycyl murein peptidoglycan amidated threonine). Positions 1114-1150 (NDKDTNRLHLLKLVMTTFFFGLVAHIFKTKRQKETKK) are cleaved as a propeptide — removed by sortase.

It belongs to the peptidase S8 family. Post-translationally, cleaved by SpeB protease; leading to its degradation. Degradation by SpeB is probably strictly regulated to preserve integrity of C5a peptidase.

It localises to the secreted. It is found in the cell wall. The catalysed reaction is The primary cleavage site is at 67-His-|-Lys-68 in human C5a with a minor secondary cleavage site at 58-Ala-|-Ser-59.. Functionally, this virulence factor of S.pyogenes specifically cleaves the human serum chemotaxin C5a at '68-Lys-|-Asp-69' bond near its C-terminus, destroying its ability to serve as a chemoattractant. This Streptococcus pyogenes serotype M18 (strain MGAS8232) protein is C5a peptidase (scpA).